The sequence spans 395 residues: F-box protein At5g46170 (395 aa).

An F-box domain is found at 24 to 72 (IDHFDHLPDSILLLVFNKIGDVKALGRCCVVSRRFHSLVPQVDNVVVRV). Residues 122–158 (TKRSSSSCGGSGSSSSSLSISGDDDGGEIEQGGVTHH) form a disordered region. Low complexity predominate over residues 125-142 (SSSSCGGSGSSSSSLSIS).

This is F-box protein At5g46170 from Arabidopsis thaliana (Mouse-ear cress).